The primary structure comprises 375 residues: Hemolysin BL-binding component (375 aa).

The first 31 residues, 1–31 (MIKKIPYKLLAVSTLLTITTANVVSPVATFA), serve as a signal peptide directing secretion. Residues 232 to 252 (FNVMKGAILGLPIIGGIIVGV) traverse the membrane as a helical segment.

As to quaternary structure, composed of a binding component, B, and two lytic components, L1 and L2. All three subunits act synergically to cause hemolysis.

Its subcellular location is the secreted. The protein resides in the host cell membrane. Cytotoxic protein, part of the enterotoxin complex. Responsible for binding to erythrocytes. This enterotoxin is thought to be the cause of the diarrheal form of gastroenteritis caused by food-borne strains of B.cereus. The sequence is that of Hemolysin BL-binding component (hblA) from Bacillus cereus.